Here is a 126-residue protein sequence, read N- to C-terminus: Heterotrimeric G protein gamma subunit GPG1 (126 aa).

G proteins are composed of 3 units, alpha, beta and gamma. GPG1 interacts with the beta subunits GBP1 and GPB2.

It is found in the cytoplasm. In terms of biological role, gamma subunit of a guanine nucleotide-binding protein (G protein). G proteins are involved as modulators or transducers in various transmembrane signaling systems. The beta and gamma chains are required for the GTPase activity, for replacement of GDP by GTP, and for G protein-effector interaction. Involved in the determination of the cAMP level according to nutritional conditions, most probably as a regulator of cAMP phosphodiesterase. Required for the control of pseudohyphal and haploid invasive growth. This is Heterotrimeric G protein gamma subunit GPG1 (GPG1) from Saccharomyces cerevisiae (strain ATCC 204508 / S288c) (Baker's yeast).